The primary structure comprises 243 residues: MSQTHFGFQQVDEREKAGKVAGVFHSVASKYDVMNDLMSGGMHRLWKMFTIAQAAVRPGYKVLDIAGGTGDLAKAFARQAGPTGEVWLTDINESMLRVGRDRLLDAGVLTPTCLCDAEHIPFPNAYFDVVTVAFGLRNMTHKDRALAEMRRVVKPGGKVMVLEFSKVWQPLEKAYDVYSFKVLPWLGSKVAGDAESYRYLAESIRMHPDQETLKQMMEQAGLDSVEYFNLTAGVVALHVGRRL.

S-adenosyl-L-methionine is bound by residues Thr-69, Asp-90, and 116–117 (DA).

It belongs to the class I-like SAM-binding methyltransferase superfamily. MenG/UbiE family.

It catalyses the reaction a 2-demethylmenaquinol + S-adenosyl-L-methionine = a menaquinol + S-adenosyl-L-homocysteine + H(+). The catalysed reaction is a 2-methoxy-6-(all-trans-polyprenyl)benzene-1,4-diol + S-adenosyl-L-methionine = a 5-methoxy-2-methyl-3-(all-trans-polyprenyl)benzene-1,4-diol + S-adenosyl-L-homocysteine + H(+). It functions in the pathway quinol/quinone metabolism; menaquinone biosynthesis; menaquinol from 1,4-dihydroxy-2-naphthoate: step 2/2. It participates in cofactor biosynthesis; ubiquinone biosynthesis. Functionally, methyltransferase required for the conversion of demethylmenaquinol (DMKH2) to menaquinol (MKH2) and the conversion of 2-polyprenyl-6-methoxy-1,4-benzoquinol (DDMQH2) to 2-polyprenyl-3-methyl-6-methoxy-1,4-benzoquinol (DMQH2). The chain is Ubiquinone/menaquinone biosynthesis C-methyltransferase UbiE from Ralstonia nicotianae (strain ATCC BAA-1114 / GMI1000) (Ralstonia solanacearum).